A 503-amino-acid chain; its full sequence is Cytochrome P450 714C1 (503 aa).

At 1 to 6 (MEKLLA) the chain is on the lumenal side. Residues 7-27 (LIVVLVILLSLALFYLCNILW) traverse the membrane as a helical; Signal-anchor for type III membrane protein segment. Topologically, residues 28 to 503 (LRAVKIRKKL…GLPLMVTKLP (476 aa)) are cytoplasmic. C450 is a heme binding site.

It belongs to the cytochrome P450 family. The cofactor is heme.

Its subcellular location is the membrane. In terms of biological role, probably not involved in gibberellin metabolism since over-expression of CYP714C1 in a heterologous system does not induce semi-dwarfism. The chain is Cytochrome P450 714C1 (CYP714C1) from Oryza sativa subsp. japonica (Rice).